The primary structure comprises 290 residues: Small ribosomal subunit protein bS6 (290 aa).

Positions 208–233 (VEEAKTTAKKPAAPKMSAAERAKVDG) are disordered.

The protein belongs to the bacterial ribosomal protein bS6 family.

In terms of biological role, binds together with bS18 to 16S ribosomal RNA. The sequence is that of Small ribosomal subunit protein bS6 from Mesoplasma florum (strain ATCC 33453 / NBRC 100688 / NCTC 11704 / L1) (Acholeplasma florum).